The chain runs to 115 residues: UPF0145 protein lp_2083 (115 aa).

The protein belongs to the UPF0145 family.

The sequence is that of UPF0145 protein lp_2083 from Lactiplantibacillus plantarum (strain ATCC BAA-793 / NCIMB 8826 / WCFS1) (Lactobacillus plantarum).